Reading from the N-terminus, the 681-residue chain is Chaperone protein htpG (681 aa).

The tract at residues 1-326 (MQKGNIGVTT…SPDIPLNVSR (326 aa)) is a; substrate-binding. Positions 327 to 545 (SYLQSDSNVK…YMRRMKEMAN (219 aa)) are b. A c region spans residues 546 to 681 (IQAGMSFYGE…NFVKRSIELI (136 aa)). Residues 601–620 (DALKKKQEGKKDEDIPTAEK) are disordered.

This sequence belongs to the heat shock protein 90 family. Homodimer.

The protein resides in the cytoplasm. Its function is as follows. Molecular chaperone. Has ATPase activity. In Bacteroides fragilis (strain 638R), this protein is Chaperone protein htpG.